The sequence spans 129 residues: UPF0148 protein APE_0207 (129 aa).

This sequence belongs to the UPF0148 family.

The chain is UPF0148 protein APE_0207 from Aeropyrum pernix (strain ATCC 700893 / DSM 11879 / JCM 9820 / NBRC 100138 / K1).